A 324-amino-acid chain; its full sequence is Fe-S cluster assembly protein dre2 (324 aa).

An N-terminal SAM-like domain region spans residues 28 to 158 (GSPSKRTLLL…KMDQPKSFAI (131 aa)). Residues 159 to 217 (PLRRNGKKKDAAKTETFAPAPAPAPPVQPVTVGMINNDDDYENDDDLIDEDTLLSDEDL) are linker. [2Fe-2S] cluster-binding residues include Cys226, Cys237, Cys240, and Cys242. Positions 226-242 (CQPKPGRRRRACKDCTC) are fe-S binding site A. [4Fe-4S] cluster-binding residues include Cys287, Cys290, Cys298, and Cys301. 2 short sequence motifs (cx2C motif) span residues 287–290 (CGNC) and 298–301 (CAGC). The interval 287-301 (CGNCALGDAFRCAGC) is fe-S binding site B.

It belongs to the anamorsin family. In terms of assembly, monomer. Interacts with tah18. Interacts with mia40. The cofactor is [2Fe-2S] cluster. Requires [4Fe-4S] cluster as cofactor.

Its subcellular location is the cytoplasm. It localises to the mitochondrion intermembrane space. In terms of biological role, component of the cytosolic iron-sulfur (Fe-S) protein assembly (CIA) machinery required for the maturation of extramitochondrial Fe-S proteins. Part of an electron transfer chain functioning in an early step of cytosolic Fe-S biogenesis, facilitating the de novo assembly of a [4Fe-4S] cluster on the scaffold complex cfd1-nbp35. Electrons are transferred to dre2 from NADPH via the FAD- and FMN-containing protein tah18. Tah18-dre2 are also required for the assembly of the diferric tyrosyl radical cofactor of ribonucleotide reductase (RNR), probably by providing electrons for reduction during radical cofactor maturation in the catalytic small subunit rnr2. This is Fe-S cluster assembly protein dre2 from Aspergillus niger (strain ATCC MYA-4892 / CBS 513.88 / FGSC A1513).